A 235-amino-acid chain; its full sequence is MICOS complex subunit MIC25 (235 aa).

Residue glycine 2 is the site of N-myristoyl glycine attachment. Residues serine 13 and serine 31 each carry the phosphoserine modification. Disordered regions lie at residues 31 to 90 (SENV…VKRY) and 106 to 132 (KREREAATKHSKASLPTGEGSISHEEQ). The stretch at 129–176 (HEEQKSVRLARELESREAELRRRDTFYKEQLERIERKNAEMYKLSSEQ) forms a coiled coil. A CHCH domain is found at 194 to 235 (EPVCSGLQAQILHCYRDRPHEVLLCSDLVKAYQRCVSAAHKG). 2 short sequence motifs (cx9C motif) span residues 197–207 (CSGLQAQILHC) and 218–228 (CSDLVKAYQRC). Intrachain disulfides connect cysteine 197/cysteine 228 and cysteine 207/cysteine 218.

This sequence belongs to the MICOS complex subunit Mic19 family. Metazoan Mic25 subfamily. As to quaternary structure, component of the mitochondrial contact site and cristae organizing system (MICOS) complex, composed of at least MICOS10/MIC10, CHCHD3/MIC19, CHCHD6/MIC25, APOOL/MIC27, IMMT/MIC60, APOO/MIC23/MIC26 and MICOS13/MIC13. This complex was also known under the names MINOS or MitOS complex. The MICOS complex associates with mitochondrial outer membrane proteins SAMM50, MTX1 and MTX2 (together described as components of the mitochondrial outer membrane sorting assembly machinery (SAM) complex) and DNAJC11, mitochondrial inner membrane protein TMEM11 and with HSPA9. The MICOS and SAM complexes together with DNAJC11 are part of a large protein complex spanning both membranes termed the mitochondrial intermembrane space bridging (MIB) complex. Interacts with DISC1. Interacts with DISC1. Interacts with IMMT/MIC60. (Microbial infection) Interacts with human cytomegalovirus protein UL37 isoform vMIA; this interaction rewires mitochondria by engaging the conserved MICOS complex.

It localises to the mitochondrion inner membrane. Its subcellular location is the mitochondrion. In terms of biological role, component of the MICOS complex, a large protein complex of the mitochondrial inner membrane that plays crucial roles in the maintenance of crista junctions, inner membrane architecture, and formation of contact sites to the outer membrane. The polypeptide is MICOS complex subunit MIC25 (CHCHD6) (Homo sapiens (Human)).